The following is a 204-amino-acid chain: 5'-deoxynucleotidase HDDC2 (204 aa).

The residue at position 2 (Ala2) is an N-acetylalanine. Phosphoserine is present on residues Ser3 and Ser5. In terms of domain architecture, HD spans 46–148 (VSDHMYRMAV…VKQLDQCEMI (103 aa)). Residues His49, His77, Asp78, Glu81, Asp86, Ile87, and Asp143 each coordinate a divalent metal cation. Ser204 carries the post-translational modification Phosphoserine.

The protein belongs to the HDDC2 family. As to quaternary structure, homodimer. It depends on Mn(2+) as a cofactor. Co(2+) serves as cofactor. The cofactor is Mg(2+).

It carries out the reaction a 2'-deoxyribonucleoside 5'-phosphate + H2O = a 2'-deoxyribonucleoside + phosphate. Functionally, catalyzes the dephosphorylation of the nucleoside 5'-monophosphates deoxyadenosine monophosphate (dAMP), deoxycytidine monophosphate (dCMP), deoxyguanosine monophosphate (dGMP) and deoxythymidine monophosphate (dTMP). The protein is 5'-deoxynucleotidase HDDC2 (HDDC2) of Homo sapiens (Human).